The sequence spans 279 residues: Protoheme IX farnesyltransferase (279 aa).

The next 9 membrane-spanning stretches (helical) occupy residues 1-21 (MIKPGIILGNIICLSGGFFLA), 29-49 (IFFLKTVFGLILIISSSCILN), 79-99 (ILFFFSIILLILGLLVFYIYI), 101-121 (FLCTIISFFGFFFYVYLYSYL), 128-148 (FSTFVGSVSGSLPPIIGYVAV), 156-176 (CTILFFMFSFWQIAHSYSIII), 200-220 (IIFISICILNLFFFNFLLYFF), 225-245 (FFYFLYTSFFIFLWFIFSFLS), and 254-274 (IWSRIMFFFSIFIIFMISFLM).

Belongs to the UbiA prenyltransferase family. Protoheme IX farnesyltransferase subfamily.

The protein resides in the cell membrane. The enzyme catalyses heme b + (2E,6E)-farnesyl diphosphate + H2O = Fe(II)-heme o + diphosphate. It functions in the pathway porphyrin-containing compound metabolism; heme O biosynthesis; heme O from protoheme: step 1/1. In terms of biological role, converts heme B (protoheme IX) to heme O by substitution of the vinyl group on carbon 2 of heme B porphyrin ring with a hydroxyethyl farnesyl side group. The chain is Protoheme IX farnesyltransferase from Buchnera aphidicola subsp. Cinara cedri (strain Cc).